Consider the following 118-residue polypeptide: UPF0148 protein M1627_1409 (118 aa).

The protein belongs to the UPF0148 family.

The polypeptide is UPF0148 protein M1627_1409 (Saccharolobus islandicus (strain M.16.27) (Sulfolobus islandicus)).